The following is a 371-amino-acid chain: DNA replication and repair protein RecF (371 aa).

30 to 37 contributes to the ATP binding site; sequence GENAQGKT.

Belongs to the RecF family.

The protein resides in the cytoplasm. In terms of biological role, the RecF protein is involved in DNA metabolism; it is required for DNA replication and normal SOS inducibility. RecF binds preferentially to single-stranded, linear DNA. It also seems to bind ATP. This is DNA replication and repair protein RecF from Lysinibacillus sphaericus (strain C3-41).